The chain runs to 200 residues: V-type proton ATPase subunit E (200 aa).

This sequence belongs to the V-ATPase E subunit family.

In terms of biological role, produces ATP from ADP in the presence of a proton gradient across the membrane. The polypeptide is V-type proton ATPase subunit E (Thermoanaerobacter pseudethanolicus (strain ATCC 33223 / 39E) (Clostridium thermohydrosulfuricum)).